The primary structure comprises 102 residues: Large ribosomal subunit protein uL24 (102 aa).

It belongs to the universal ribosomal protein uL24 family. In terms of assembly, part of the 50S ribosomal subunit.

Functionally, one of two assembly initiator proteins, it binds directly to the 5'-end of the 23S rRNA, where it nucleates assembly of the 50S subunit. In terms of biological role, one of the proteins that surrounds the polypeptide exit tunnel on the outside of the subunit. In Alcanivorax borkumensis (strain ATCC 700651 / DSM 11573 / NCIMB 13689 / SK2), this protein is Large ribosomal subunit protein uL24.